We begin with the raw amino-acid sequence, 198 residues long: MEKRGRGVKSSPIQTPNQTPQQAPVTPRKERRPSMFEKEAYTQILRERLRESIHNVQYVEPPFDDSIADIGKEWKSALAKLKFANSYRMEPLKKFQAHSVETKVQQILTESLKDVKYDDKVFSHLSLELADRILLAVKEFGYHRYKFIIKVLFIQKTGQAINIASRWIWDIAWDSWVAAKHEAESYVALVLVFALYYE.

Residues 1 to 34 (MEKRGRGVKSSPIQTPNQTPQQAPVTPRKERRPS) are disordered. Residues 11 to 24 (SPIQTPNQTPQQAP) are compositionally biased toward polar residues.

Belongs to the dynein light chain Tctex-type family. In terms of assembly, interacts with CCDC159. Interacts with CSNK2B. As to expression, expressed predominantly in testis. Also expressed in brain, lung and trachea.

The protein localises to the cytoplasm. It localises to the cytoskeleton. The protein resides in the cytoplasmic granule. It is found in the membrane. In terms of biological role, may be an accessory component of axonemal dynein and cytoplasmic dynein 1. Candidate for involvement in male sterility. This is Dynein light chain Tctex-type protein 2 from Homo sapiens (Human).